We begin with the raw amino-acid sequence, 125 residues long: Glycine cleavage system H protein (125 aa).

Residues Ser-22–Thr-104 enclose the Lipoyl-binding domain. Residue Lys-63 is modified to N6-lipoyllysine.

The protein belongs to the GcvH family. As to quaternary structure, the glycine cleavage system is composed of four proteins: P, T, L and H. The cofactor is (R)-lipoate.

The glycine cleavage system catalyzes the degradation of glycine. The H protein shuttles the methylamine group of glycine from the P protein to the T protein. Its function is as follows. Is also involved in protein lipoylation via its role as an octanoyl/lipoyl carrier protein intermediate. The sequence is that of Glycine cleavage system H protein from Listeria innocua serovar 6a (strain ATCC BAA-680 / CLIP 11262).